Reading from the N-terminus, the 529-residue chain is E3 ubiquitin-protein ligase arih1 (529 aa).

Disordered regions lie at residues 1-29 (MDSD…HEDE) and 46-69 (ERAG…EEDE). Positions 51–64 (CGEGGGSALGPGPG) are enriched in gly residues. The tract at residues 77-125 (TAEQILQHMVECIREVNEVIQNPATITRILLSHFNWDKEKLMERYFDGN) is UBA-like. The TRIAD supradomain stretch occupies residues 154–365 (LDMPCQICYL…SAWYNCNRYN (212 aa)). Residues Cys158, Cys161, Cys175, His177, Cys180, Cys183, Cys203, Cys208, Cys248, Cys253, Cys269, Cys271, Cys276, Cys279, His284, Cys289, Cys316, and Cys319 each coordinate Zn(2+). The RING-type 1 zinc finger occupies 158 to 208 (CQICYLNYPNSYFTGLECGHKFCMQCWGEYLTTKIIEEGMGQTISCPAHGC). The segment at 228–289 (LKYQHLITNS…GENWHDPVKC (62 aa)) adopts an IBR-type zinc-finger fold. An RING-type 2; atypical zinc finger spans residues 316–347 (CPKCHVTIEKDGGCNHMVCRNQNCKAEFCWVC). Residue Cys329 is part of the active site. Zn(2+) is bound by residues Cys334, Cys339, Cys344, Cys347, His354, and Cys361. The tract at residues 380-529 (RAALQRYLFY…EKDLWEYIED (150 aa)) is ariadne domain.

It belongs to the RBR family. Ariadne subfamily. In terms of assembly, interacts (via the first RING-type zinc finger) with ube2l3. Associates with cullin-RING ubiquitin ligase (CRL) complexes containing neddylated cullin.

Its subcellular location is the cytoplasm. It is found in the nucleus. The catalysed reaction is [E2 ubiquitin-conjugating enzyme]-S-ubiquitinyl-L-cysteine + [acceptor protein]-L-lysine = [E2 ubiquitin-conjugating enzyme]-L-cysteine + [acceptor protein]-N(6)-ubiquitinyl-L-lysine.. It functions in the pathway protein modification; protein ubiquitination. Its activity is regulated as follows. Autoinhibited by the ariadne domain, which masks the second RING-type zinc finger that contains the active site and inhibits the E3 activity. Inhibition is relieved upon binding to neddylated cullin-RING ubiquitin ligase complexes, which activate the E3 ligase activity of ARIH1. E3 ubiquitin-protein ligase, which catalyzes ubiquitination of target proteins together with ubiquitin-conjugating enzyme E2 ube2l3. Acts as an atypical E3 ubiquitin-protein ligase by working together with cullin-RING ubiquitin ligase (CRL) complexes and initiating ubiquitination of CRL substrates: associates with CRL complexes and specifically mediates addition of the first ubiquitin on CRLs targets. The initial ubiquitin is then elongated. E3 ubiquitin-protein ligase activity is activated upon binding to neddylated cullin-RING ubiquitin ligase complexes. This Xenopus laevis (African clawed frog) protein is E3 ubiquitin-protein ligase arih1 (arih1).